Here is a 220-residue protein sequence, read N- to C-terminus: Cysteine-rich venom protein VAR5 (220 aa).

Positions 1–22 are cleaved as a signal peptide; it reads MILLKLYLTLAAILCQSRGTTS. The 129-residue stretch at 41 to 169 folds into the SCP domain; the sequence is NKHNDLRRTV…PLKYFLVCQY (129 aa). Intrachain disulfides connect C77/C156, C95/C170, C151/C167, C189/C196, and C192/C201. The ShKT domain maps to 205 to 220; sequence CEHSNQYINCPDLTKQ.

It belongs to the CRISP family. In terms of processing, contains 8 disulfide bonds. As to expression, expressed by the venom gland.

Its subcellular location is the secreted. Blocks ryanodine receptors, and potassium channels. The protein is Cysteine-rich venom protein VAR5 of Varanus acanthurus (Ridge-tailed monitor).